The primary structure comprises 299 residues: Bifunctional protein FolD 2 (299 aa).

This sequence belongs to the tetrahydrofolate dehydrogenase/cyclohydrolase family. In terms of assembly, homodimer.

It catalyses the reaction (6R)-5,10-methylene-5,6,7,8-tetrahydrofolate + NADP(+) = (6R)-5,10-methenyltetrahydrofolate + NADPH. It carries out the reaction (6R)-5,10-methenyltetrahydrofolate + H2O = (6R)-10-formyltetrahydrofolate + H(+). The protein operates within one-carbon metabolism; tetrahydrofolate interconversion. Functionally, catalyzes the oxidation of 5,10-methylenetetrahydrofolate to 5,10-methenyltetrahydrofolate and then the hydrolysis of 5,10-methenyltetrahydrofolate to 10-formyltetrahydrofolate. The chain is Bifunctional protein FolD 2 (FOLD2) from Arabidopsis thaliana (Mouse-ear cress).